Reading from the N-terminus, the 587-residue chain is MMGSENADGFEETNLNAQRDDMENLDLGVDGGDHPLKISDVNGDTSNSGYRSAMSTLSNVRDPLSPPPTVMIPADSDPLLAPSSYEDFRSSFSSKPISSDNSYIEPPSYADVIFSPFDENSDSEINGTEDNSLHSQFSDSLSRSPSSSSSDYIKITVSNPQKEQEISNSIVGGNTYITYQITTRTNLPDFGGPSEFSVRRRFRDVVTLADRLAETYRGFCIPPRPDKSVVESQVMQKQEFVEQRRVALEKYLRRLSAHPVIRNSDELKVFLQVQGKLPLPMSTDVASRMLDGAVKLPKQLFGEGGASAVPVTEVGQPARGGRDLLRLFKELRQSVSNDWGGSKPPVVEEDKEFLEKKEKMHDLEQQIINASQQAESLVKAQQDMGETMGELGLAFIKLTKFENEEAVCNPQRTRANDMKNLATAAVKASRFYRELNSQTVKHLDTLHEYLGMMMAVQGAFADRSSALLTVQTLLSELPSLQTRVEKLEAASSKVFGGDKSRIRKIEELKETIKVTEDAKNVAIKGYERIKENNRSEVERLDRERRADFMNMMKGFVVNQVGYAEKMGNVWAKVAEETSQYDREKQSS.

Disordered regions lie at residues 1–78 (MMGS…DSDP) and 115–151 (SPFD…SSSD). Composition is skewed to polar residues over residues 42–59 (NGDT…TLSN) and 123–134 (SEINGTEDNSLH). Residues 135-150 (SQFSDSLSRSPSSSSS) are compositionally biased toward low complexity. Position 144 is a phosphoserine (serine 144). In terms of domain architecture, PX spans 157 to 277 (VSNPQKEQEI…KVFLQVQGKL (121 aa)). Positions 201, 227, and 244 each coordinate a 1,2-diacyl-sn-glycero-3-phospho-(1D-myo-inositol-3-phosphate). Residues 331-586 (LRQSVSNDWG…TSQYDREKQS (256 aa)) form the BAR domain.

It belongs to the sorting nexin family. As to quaternary structure, homodimer. Heterodimer with SNX1 or SNX2A. Component of the retromer complex which consists of VPS29 (MAG1), VPS26 (VPS26A or VPS26B), VPS35 (VPS35A or VPS35B or VPS35C), VPS5/17 (SNX1 or SNX2A or SNX2B). As to expression, ubiquitously expressed but at a lower level in flowers, siliques, and senescing leaves.

The protein resides in the cytoplasm. It localises to the endosome membrane. Its subcellular location is the prevacuolar compartment membrane. It is found in the golgi apparatus. The protein localises to the trans-Golgi network membrane. In terms of biological role, plays a role in vesicular protein sorting. Acts at the crossroads between the secretory and endocytic pathways. Is involved in the endosome to vacuole protein transport and, as component of the membrane-associated retromer complex, is also involved in endosome-to-Golgi retrograde transport. Also involved in the efficient sorting of seed storage protein globulin 12S. In Arabidopsis thaliana (Mouse-ear cress), this protein is Sorting nexin 2A (SNX2A).